The chain runs to 80 residues: Small ribosomal subunit protein bS16 (80 aa).

The protein belongs to the bacterial ribosomal protein bS16 family.

The polypeptide is Small ribosomal subunit protein bS16 (Blochmanniella pennsylvanica (strain BPEN)).